A 40-amino-acid polypeptide reads, in one-letter code: Accessory gland-specific peptide 57Db (40 aa).

Positions 1–17 (MKITSALVLLFAGVAFA) are cleaved as a signal peptide.

Lumen fluid of male accessory glands, becomes seminal fluid.

Its subcellular location is the secreted. In terms of biological role, transferred from male to female during mating and may affect egglaying and behavior after mating. In Drosophila melanogaster (Fruit fly), this protein is Accessory gland-specific peptide 57Db (Mst57Db).